The sequence spans 641 residues: Chaperone protein DnaK 2 (641 aa).

Threonine 199 bears the Phosphothreonine; by autocatalysis mark. A compositionally biased stretch (low complexity) spans 601–616 (MAQQQAQAQHAQSSQQ). The tract at residues 601-641 (MAQQQAQAQHAQSSQQTNDTTGQSSTDDDVFEAEFEEVKDK) is disordered. Over residues 626–635 (TDDDVFEAEF) the composition is skewed to acidic residues.

Belongs to the heat shock protein 70 family.

Its function is as follows. Acts as a chaperone. This is Chaperone protein DnaK 2 from Photobacterium profundum (strain SS9).